A 302-amino-acid chain; its full sequence is Sulfate adenylyltransferase subunit 2 (302 aa).

This sequence belongs to the PAPS reductase family. CysD subfamily. Heterodimer composed of CysD, the smaller subunit, and CysN.

It carries out the reaction sulfate + ATP + H(+) = adenosine 5'-phosphosulfate + diphosphate. The protein operates within sulfur metabolism; hydrogen sulfide biosynthesis; sulfite from sulfate: step 1/3. In terms of biological role, with CysN forms the ATP sulfurylase (ATPS) that catalyzes the adenylation of sulfate producing adenosine 5'-phosphosulfate (APS) and diphosphate, the first enzymatic step in sulfur assimilation pathway. APS synthesis involves the formation of a high-energy phosphoric-sulfuric acid anhydride bond driven by GTP hydrolysis by CysN coupled to ATP hydrolysis by CysD. This Pectobacterium carotovorum subsp. carotovorum (strain PC1) protein is Sulfate adenylyltransferase subunit 2.